The primary structure comprises 884 residues: Schlafen family member 5 (884 aa).

An ATP-binding site is contributed by 574-581; it reads GLPGSGKT.

The protein belongs to the Schlafen family. Subgroup III subfamily.

May have a role in hematopoietic cell differentiation. The protein is Schlafen family member 5 (Slfn5) of Mus musculus (Mouse).